Consider the following 653-residue polypeptide: PAN2-PAN3 deadenylation complex subunit PAN3 (653 aa).

2 disordered regions span residues 1-21 (MASDSRRGTGSPKMKGRENAK) and 45-128 (HDPN…AAPD). The segment at 19–48 (NAKDTLCRNVTIYGRCRYEDKGCVYNHDPN) adopts a C3H1-type zinc-finger fold. Over residues 68–95 (SFTPSLLSSNGSSPTSSSATLKKTTTIS) the composition is skewed to low complexity. A compositionally biased stretch (polar residues) spans 108–119 (GISSRSNASTPS). A pseudokinase domain region spans residues 256-516 (QTLPNTQLPA…TIDIFITGIS (261 aa)). ATP-binding positions include Arg-308, 357 to 364 (DYHPLSKT), and 416 to 417 (SK). The stretch at 517–555 (SQLMSTFDSALHMDDQLTSDLSRELENGRLVRLMTKLNF) forms a coiled coil. The knob domain stretch occupies residues 556 to 653 (INERPEYEHD…ALLKPTRRVH (98 aa)).

The protein belongs to the protein kinase superfamily. PAN3 family. As to quaternary structure, homodimer. Forms a heterotrimer with a catalytic subunit pan2 to form the poly(A)-nuclease (PAN) deadenylation complex. Interacts (via PAM-2 motif) with poly(A)-binding protein pab1 (via PABC domain), conferring substrate specificity of the enzyme complex.

Its subcellular location is the cytoplasm. Regulatory subunit of the poly(A)-nuclease (PAN) deadenylation complex, one of two cytoplasmic mRNA deadenylases involved in mRNA turnover. PAN specifically shortens poly(A) tails of RNA and the activity is stimulated by poly(A)-binding protein pab1. PAN deadenylation is followed by rapid degradation of the shortened mRNA tails by the CCR4-NOT complex. Deadenylated mRNAs are then degraded by two alternative mechanisms, namely exosome-mediated 3'-5' exonucleolytic degradation, or deadenylation-dependent mRNA decaping and subsequent 5'-3' exonucleolytic degradation by xrn1. May also be involved in post-transcriptional maturation of mRNA poly(A) tails. pan3 acts as a positive regulator for PAN activity, recruiting the catalytic subunit pan2 to mRNA via its interaction with RNA and with pab1. The chain is PAN2-PAN3 deadenylation complex subunit PAN3 from Aspergillus terreus (strain NIH 2624 / FGSC A1156).